Reading from the N-terminus, the 348-residue chain is Fructose-1,6-bisphosphatase class 1 (348 aa).

Mg(2+) contacts are provided by Glu92, Asp111, Leu113, and Asp114. Substrate is bound by residues 114–117 (DGSS) and Asn204. Glu276 contributes to the Mg(2+) binding site.

Belongs to the FBPase class 1 family. Homotetramer. It depends on Mg(2+) as a cofactor.

The protein localises to the cytoplasm. The enzyme catalyses beta-D-fructose 1,6-bisphosphate + H2O = beta-D-fructose 6-phosphate + phosphate. It functions in the pathway carbohydrate biosynthesis; gluconeogenesis. This chain is Fructose-1,6-bisphosphatase class 1, found in Methylorubrum extorquens (strain CM4 / NCIMB 13688) (Methylobacterium extorquens).